We begin with the raw amino-acid sequence, 216 residues long: Cytidylate kinase (216 aa).

7 to 15 (GPAGTGKST) contacts ATP.

This sequence belongs to the cytidylate kinase family. Type 1 subfamily.

Its subcellular location is the cytoplasm. The enzyme catalyses CMP + ATP = CDP + ADP. It catalyses the reaction dCMP + ATP = dCDP + ADP. The polypeptide is Cytidylate kinase (Chlamydia muridarum (strain MoPn / Nigg)).